Consider the following 248-residue polypeptide: Probable transcriptional regulatory protein NGR_c27950 (248 aa).

This sequence belongs to the TACO1 family.

The protein localises to the cytoplasm. The chain is Probable transcriptional regulatory protein NGR_c27950 from Sinorhizobium fredii (strain NBRC 101917 / NGR234).